The primary structure comprises 96 residues: Class I hydrophobin 2 (96 aa).

The first 15 residues, 1 to 15 (MFKALIVALAAVAAA), serve as a signal peptide directing secretion. Intrachain disulfides connect Cys28/Cys77, Cys34/Cys71, Cys35/Cys55, and Cys78/Cys91.

This sequence belongs to the fungal hydrophobin family.

It is found in the secreted. It localises to the cell wall. Its function is as follows. Aerial growth, conidiation, and dispersal of filamentous fungi in the environment rely upon a capability of their secreting small amphipathic proteins called hydrophobins (HPBs) with low sequence identity. Class I can self-assemble into an outermost layer of rodlet bundles on aerial cell surfaces, conferring cellular hydrophobicity that supports fungal growth, development and dispersal; whereas Class II form highly ordered films at water-air interfaces through intermolecular interactions but contribute nothing to the rodlet structure. Hyd2 plays a neglectable role in hyphal growth and asexual development and does not seem involved in cellular hydrophobicity, conidial adhesion, stress tolerance nor insect pathogenicity. This is Class I hydrophobin 2 from Metarhizium robertsii (strain ARSEF 23 / ATCC MYA-3075) (Metarhizium anisopliae (strain ARSEF 23)).